The sequence spans 181 residues: Large ribosomal subunit protein bL17 (181 aa).

Positions 141–159 (KAASATAESAPVATANDAA) are enriched in low complexity. Positions 141-181 (KAASATAESAPVATANDAAPAEEAEVQGVKDPAEDCEAKAD) are disordered. Basic and acidic residues predominate over residues 171–181 (DPAEDCEAKAD).

This sequence belongs to the bacterial ribosomal protein bL17 family. As to quaternary structure, part of the 50S ribosomal subunit. Contacts protein L32.

The chain is Large ribosomal subunit protein bL17 from Geotalea daltonii (strain DSM 22248 / JCM 15807 / FRC-32) (Geobacter daltonii).